We begin with the raw amino-acid sequence, 328 residues long: Serine/threonine-protein phosphatase PP2A-2 catalytic subunit (328 aa).

Positions 76, 78, 104, and 136 each coordinate Mn(2+). His-137 functions as the Proton donor in the catalytic mechanism. His-186 and His-260 together coordinate Mn(2+). Leu-328 carries the leucine methyl ester modification.

The protein belongs to the PPP phosphatase family. PP-2A subfamily. Mn(2+) is required as a cofactor.

The enzyme catalyses O-phospho-L-seryl-[protein] + H2O = L-seryl-[protein] + phosphate. The catalysed reaction is O-phospho-L-threonyl-[protein] + H2O = L-threonyl-[protein] + phosphate. This chain is Serine/threonine-protein phosphatase PP2A-2 catalytic subunit (PP2A-2), found in Blumeria hordei (Barley powdery mildew).